The following is a 122-amino-acid chain: uncharacterized protein (122 aa).

Residues 1 to 15 show a composition bias toward basic and acidic residues; it reads MAEPGGRGDYHKDGR. The tract at residues 1-26 is disordered; the sequence is MAEPGGRGDYHKDGRPPSLSRSPLFT.

This is an uncharacterized protein from Macaca fascicularis (Crab-eating macaque).